The following is a 185-amino-acid chain: Inner membrane-spanning protein YciB (185 aa).

A run of 5 helical transmembrane segments spans residues 19–39, 49–69, 72–92, 122–142, and 150–170; these read IHGI…LMAW, TMTW…LYFH, TFIK…LLFT, GYWI…AYAF, and FKLF…AVVI.

Belongs to the YciB family.

It localises to the cell inner membrane. In terms of biological role, plays a role in cell envelope biogenesis, maintenance of cell envelope integrity and membrane homeostasis. The protein is Inner membrane-spanning protein YciB of Acidithiobacillus ferrooxidans (strain ATCC 23270 / DSM 14882 / CIP 104768 / NCIMB 8455) (Ferrobacillus ferrooxidans (strain ATCC 23270)).